We begin with the raw amino-acid sequence, 281 residues long: Glycerol uptake facilitator protein (281 aa).

Residues 1 to 5 lie on the Cytoplasmic side of the membrane; that stretch reads MSQTS. Residues 6–34 traverse the membrane as a helical segment; sequence TLKGQCIAEFLGTGLLIFFGVGCVAALKV. Topologically, residues 35 to 39 are periplasmic; it reads AGASF. Residues 40 to 60 form a helical membrane-spanning segment; it reads GQWEISVIWGLGVAMAIYLTA. The Cytoplasmic segment spans residues 61–63; the sequence is GVS. Residues 64 to 67 lie within the membrane without spanning it; the sequence is GAHL. The NPA 1 signature appears at 68-70; the sequence is NPA. The segment at residues 68–78 is an intramembrane region (helical); that stretch reads NPAVTIALWLF. Residues 79-84 lie on the Cytoplasmic side of the membrane; that stretch reads ACFDKR. The chain crosses the membrane as a helical span at residues 85–108; it reads KVIPFIVSQVAGAFCAAALVYGLY. At 109–143 the chain is on the periplasmic side; it reads YNLFFDFEQTHHIVRGSVESVDLAGTFSTYPNPHI. Residues 144–169 form a helical membrane-spanning segment; that stretch reads NFVQAFAVEMVITAILMGLILALTDD. Residues 170 to 177 lie on the Cytoplasmic side of the membrane; that stretch reads GNGVPRGP. Residues 178 to 194 form a helical membrane-spanning segment; the sequence is LAPLLIGLLIAVIGASM. Residues 195 to 198 lie on the Periplasmic side of the membrane; the sequence is GPLT. The stretch at 199–202 is an intramembrane region; that stretch reads GFAM. Positions 203–205 match the NPA 2 motif; the sequence is NPA. The helical intramembrane region spans 203-216; that stretch reads NPARDFGPKVFAWL. Topologically, residues 217-231 are periplasmic; that stretch reads AGWGNVAFTGGRDIP. The chain crosses the membrane as a helical span at residues 232–254; sequence YFLVPLFGPIVGAIVGAFAYRKL. The Cytoplasmic portion of the chain corresponds to 255-281; it reads IGRHLPCDICVVEEKETTTPSEQKASL.

The protein belongs to the MIP/aquaporin (TC 1.A.8) family. As to quaternary structure, homotetramer.

The protein localises to the cell inner membrane. The catalysed reaction is glycerol(in) = glycerol(out). Its function is as follows. Mediates glycerol diffusion across the cytoplasmic membrane via a pore-type mechanism. This is Glycerol uptake facilitator protein (glpF) from Escherichia coli O157:H7.